Consider the following 353-residue polypeptide: Photosystem II protein D1 (353 aa).

N-acetylthreonine is present on threonine 2. Threonine 2 is modified (phosphothreonine). 3 consecutive transmembrane segments (helical) span residues tyrosine 29–serine 46, histidine 118–leucine 133, and tryptophan 142–alanine 156. Residue histidine 118 participates in chlorophyll a binding. Tyrosine 126 lines the pheophytin a pocket. [CaMn4O5] cluster-binding residues include aspartate 170 and glutamate 189. A helical membrane pass occupies residues phenylalanine 197 to leucine 218. Residue histidine 198 participates in chlorophyll a binding. A quinone is bound by residues histidine 215 and serine 264–phenylalanine 265. Residue histidine 215 participates in Fe cation binding. Position 272 (histidine 272) interacts with Fe cation. The helical transmembrane segment at phenylalanine 274–leucine 288 threads the bilayer. 4 residues coordinate [CaMn4O5] cluster: histidine 332, glutamate 333, aspartate 342, and alanine 344. Residues serine 345–glycine 353 constitute a propeptide that is removed on maturation.

Belongs to the reaction center PufL/M/PsbA/D family. In terms of assembly, PSII is composed of 1 copy each of membrane proteins PsbA, PsbB, PsbC, PsbD, PsbE, PsbF, PsbH, PsbI, PsbJ, PsbK, PsbL, PsbM, PsbT, PsbX, PsbY, PsbZ, Psb30/Ycf12, at least 3 peripheral proteins of the oxygen-evolving complex and a large number of cofactors. It forms dimeric complexes. The cofactor is The D1/D2 heterodimer binds P680, chlorophylls that are the primary electron donor of PSII, and subsequent electron acceptors. It shares a non-heme iron and each subunit binds pheophytin, quinone, additional chlorophylls, carotenoids and lipids. D1 provides most of the ligands for the Mn4-Ca-O5 cluster of the oxygen-evolving complex (OEC). There is also a Cl(-1) ion associated with D1 and D2, which is required for oxygen evolution. The PSII complex binds additional chlorophylls, carotenoids and specific lipids.. In terms of processing, tyr-161 forms a radical intermediate that is referred to as redox-active TyrZ, YZ or Y-Z. C-terminally processed by CTPA; processing is essential to allow assembly of the oxygen-evolving complex and thus photosynthetic growth.

Its subcellular location is the plastid. It is found in the chloroplast thylakoid membrane. The catalysed reaction is 2 a plastoquinone + 4 hnu + 2 H2O = 2 a plastoquinol + O2. Its function is as follows. Photosystem II (PSII) is a light-driven water:plastoquinone oxidoreductase that uses light energy to abstract electrons from H(2)O, generating O(2) and a proton gradient subsequently used for ATP formation. It consists of a core antenna complex that captures photons, and an electron transfer chain that converts photonic excitation into a charge separation. The D1/D2 (PsbA/PsbD) reaction center heterodimer binds P680, the primary electron donor of PSII as well as several subsequent electron acceptors. This is Photosystem II protein D1 from Tupiella akineta (Green alga).